Reading from the N-terminus, the 226-residue chain is Putative O-methyltransferase Mvan_4497 (226 aa).

S-adenosyl-L-methionine is bound by residues Val-53, Glu-75, 77-78 (GT), Ser-83, Asp-101, and Val-102. Asp-149 contacts substrate.

The protein belongs to the class I-like SAM-binding methyltransferase superfamily. Cation-dependent O-methyltransferase family.

This chain is Putative O-methyltransferase Mvan_4497, found in Mycolicibacterium vanbaalenii (strain DSM 7251 / JCM 13017 / BCRC 16820 / KCTC 9966 / NRRL B-24157 / PYR-1) (Mycobacterium vanbaalenii).